The chain runs to 328 residues: GMP reductase (328 aa).

The active-site Thioimidate intermediate is C176. 205 to 228 (IIADGGIRTHGDVAKSIRFGATMV) contributes to the NADP(+) binding site.

The protein belongs to the IMPDH/GMPR family. GuaC type 2 subfamily.

It carries out the reaction IMP + NH4(+) + NADP(+) = GMP + NADPH + 2 H(+). Its function is as follows. Catalyzes the irreversible NADPH-dependent deamination of GMP to IMP. It functions in the conversion of nucleobase, nucleoside and nucleotide derivatives of G to A nucleotides, and in maintaining the intracellular balance of A and G nucleotides. This Bacillus thuringiensis (strain Al Hakam) protein is GMP reductase.